Reading from the N-terminus, the 102-residue chain is Large ribosomal subunit protein uL24 (102 aa).

The protein belongs to the universal ribosomal protein uL24 family. In terms of assembly, part of the 50S ribosomal subunit.

Functionally, one of two assembly initiator proteins, it binds directly to the 5'-end of the 23S rRNA, where it nucleates assembly of the 50S subunit. One of the proteins that surrounds the polypeptide exit tunnel on the outside of the subunit. The protein is Large ribosomal subunit protein uL24 of Cupriavidus metallidurans (strain ATCC 43123 / DSM 2839 / NBRC 102507 / CH34) (Ralstonia metallidurans).